The following is a 281-amino-acid chain: Small ribosomal subunit protein uS3 (281 aa).

The region spanning 38 to 106 (IRRLLSTGLE…QVQLNILEVK (69 aa)) is the KH type-2 domain. A disordered region spans residues 218-281 (APAGAERARR…VTHEPQIAES (64 aa)). Positions 238-252 (SGAAGTTVTGTDAGR) are enriched in low complexity.

It belongs to the universal ribosomal protein uS3 family. As to quaternary structure, part of the 30S ribosomal subunit. Forms a tight complex with proteins S10 and S14.

In terms of biological role, binds the lower part of the 30S subunit head. Binds mRNA in the 70S ribosome, positioning it for translation. The polypeptide is Small ribosomal subunit protein uS3 (Mycobacterium leprae (strain TN)).